The primary structure comprises 115 residues: Nitrogenase-stabilizing/protective protein NifW (115 aa).

It belongs to the NifW family. Homotrimer; associates with NifD.

May protect the nitrogenase Fe-Mo protein from oxidative damage. The protein is Nitrogenase-stabilizing/protective protein NifW of Stutzerimonas stutzeri (strain A1501) (Pseudomonas stutzeri).